The following is a 574-amino-acid chain: Galactose transporter (574 aa).

The tract at residues 1-57 (MAVEENNMPVVSQQPQAGEDVISSLSKDSHLSAQSQKYSNDELKAGESGSEGSQSVP) is disordered. The Cytoplasmic segment spans residues 1 to 70 (MAVEENNMPV…PKKPMSEYVT (70 aa)). A compositionally biased stretch (polar residues) spans 23–38 (SSLSKDSHLSAQSQKY). 7 positions are modified to phosphoserine: S32, S35, S39, S48, S50, S53, and S55. A helical transmembrane segment spans residues 71–91 (VSLLCLCVAFGGFMFGWDTGT). Residues 92–121 (ISGFVVQTDFLRRFGMKHKDGTHYLSNVRT) lie on the Extracellular side of the membrane. Residues 122 to 142 (GLIVAIFNIGCAFGGIILSKG) form a helical membrane-spanning segment. The Cytoplasmic segment spans residues 143 to 149 (GDMYGRK). A helical membrane pass occupies residues 150 to 170 (KGLSIVVSVYIVGIIIQIASI). The Extracellular segment spans residues 171-175 (NKWYQ). A helical transmembrane segment spans residues 176 to 196 (YFIGRIISGLGVGGIAVLCPM). The Cytoplasmic portion of the chain corresponds to 197–207 (LISEIAPKHLR). The chain crosses the membrane as a helical span at residues 208 to 228 (GTLVSCYQLMITAGIFLGYCT). Over 229 to 242 (NYGTKSYSNSVQWR) the chain is Extracellular. A helical membrane pass occupies residues 243–263 (VPLGLCFAWSLFMIGALTLVP). At 264–342 (ESPRYLCEVN…MGVFVQMFQQ (79 aa)) the chain is on the cytoplasmic side. Residues 343-362 (LTGNNYFFYYGTVIFKSVGL) form a helical membrane-spanning segment. At 363-366 (DDSF) the chain is on the extracellular side. The chain crosses the membrane as a helical span at residues 367–387 (ETSIVIGVVNFASTFFSLWTV). Topologically, residues 388 to 394 (ENLGHRK) are cytoplasmic. Residues 395 to 415 (CLLLGAATMMACMVIYASVGV) form a helical membrane-spanning segment. At 416 to 435 (TRLYPHGKSQPSSKGAGNCM) the chain is on the extracellular side. Residues 436-456 (IVFTCFYIFCYATTWAPVAWV) form a helical membrane-spanning segment. The Cytoplasmic segment spans residues 457 to 472 (ITAESFPLRVKSKCMA). Residues 473–493 (LASASNWVWGFLIAFFTPFIT) form a helical membrane-spanning segment. The Extracellular segment spans residues 494 to 499 (SAINFY). The helical transmembrane segment at 500–520 (YGYVFMGCLVAMFFYVFFFVP) threads the bilayer. Topologically, residues 521–574 (ETKGLSLEEIQELWEEGVLPWKSEGWIPSSRRGNNYDLEDLQHDDKPWYKAMLE) are cytoplasmic.

This sequence belongs to the major facilitator superfamily. Sugar transporter (TC 2.A.1.1) family.

Its subcellular location is the membrane. GAL2 is a facilitated diffusion transporter required for both the high-affinity galactokinase-dependent and low-affinity galactokinase-independent galactose transport processes. The chain is Galactose transporter (GAL2) from Saccharomyces cerevisiae (strain ATCC 204508 / S288c) (Baker's yeast).